The chain runs to 93 residues: DNA-directed RNA polymerase subunit Rpo11 (93 aa).

It belongs to the archaeal Rpo11/eukaryotic RPB11/RPC19 RNA polymerase subunit family. In terms of assembly, part of the RNA polymerase complex.

It localises to the cytoplasm. The catalysed reaction is RNA(n) + a ribonucleoside 5'-triphosphate = RNA(n+1) + diphosphate. Functionally, DNA-dependent RNA polymerase (RNAP) catalyzes the transcription of DNA into RNA using the four ribonucleoside triphosphates as substrates. This is DNA-directed RNA polymerase subunit Rpo11 from Methanocella arvoryzae (strain DSM 22066 / NBRC 105507 / MRE50).